The primary structure comprises 259 residues: Adenosylcobinamide-GDP ribazoletransferase (259 aa).

5 consecutive transmembrane segments (helical) span residues Leu43–Gly63, Ala64–Leu84, Phe116–Val136, Pro141–Trp161, and Thr185–Thr205.

It belongs to the CobS family. Mg(2+) serves as cofactor.

It is found in the cell inner membrane. The enzyme catalyses alpha-ribazole + adenosylcob(III)inamide-GDP = adenosylcob(III)alamin + GMP + H(+). It carries out the reaction alpha-ribazole 5'-phosphate + adenosylcob(III)inamide-GDP = adenosylcob(III)alamin 5'-phosphate + GMP + H(+). The protein operates within cofactor biosynthesis; adenosylcobalamin biosynthesis; adenosylcobalamin from cob(II)yrinate a,c-diamide: step 7/7. Functionally, joins adenosylcobinamide-GDP and alpha-ribazole to generate adenosylcobalamin (Ado-cobalamin). Also synthesizes adenosylcobalamin 5'-phosphate from adenosylcobinamide-GDP and alpha-ribazole 5'-phosphate. The sequence is that of Adenosylcobinamide-GDP ribazoletransferase from Allorhizobium ampelinum (strain ATCC BAA-846 / DSM 112012 / S4) (Agrobacterium vitis (strain S4)).